Consider the following 224-residue polypeptide: Large ribosomal subunit protein uL1 (224 aa).

The protein belongs to the universal ribosomal protein uL1 family. In terms of assembly, part of the 50S ribosomal subunit.

In terms of biological role, binds directly to 23S rRNA. The L1 stalk is quite mobile in the ribosome, and is involved in E site tRNA release. Protein L1 is also a translational repressor protein, it controls the translation of the L11 operon by binding to its mRNA. The polypeptide is Large ribosomal subunit protein uL1 (Borrelia duttonii (strain Ly)).